The chain runs to 338 residues: Ornithine carbamoyltransferase, catabolic (338 aa).

Carbamoyl phosphate contacts are provided by residues 65-68 (STRT), glutamine 92, arginine 116, and 143-146 (HPTQ). L-ornithine is bound by residues asparagine 175, aspartate 239, and 243–244 (SM). Residues 280-281 (CL) and arginine 325 contribute to the carbamoyl phosphate site.

Belongs to the aspartate/ornithine carbamoyltransferase superfamily. OTCase family.

The protein resides in the cytoplasm. It catalyses the reaction carbamoyl phosphate + L-ornithine = L-citrulline + phosphate + H(+). Its pathway is amino-acid degradation; L-arginine degradation via ADI pathway; carbamoyl phosphate from L-arginine: step 2/2. Its function is as follows. Reversibly catalyzes the transfer of the carbamoyl group from carbamoyl phosphate (CP) to the N(epsilon) atom of ornithine (ORN) to produce L-citrulline. This is Ornithine carbamoyltransferase, catabolic from Treponema denticola (strain ATCC 35405 / DSM 14222 / CIP 103919 / JCM 8153 / KCTC 15104).